The following is a 206-amino-acid chain: Small ribosomal subunit protein uS4 (206 aa).

The region spanning 96–156 (SRLDNVVYRM…EKSKKQLRIQ (61 aa)) is the S4 RNA-binding domain.

The protein belongs to the universal ribosomal protein uS4 family. In terms of assembly, part of the 30S ribosomal subunit. Contacts protein S5. The interaction surface between S4 and S5 is involved in control of translational fidelity.

In terms of biological role, one of the primary rRNA binding proteins, it binds directly to 16S rRNA where it nucleates assembly of the body of the 30S subunit. Functionally, with S5 and S12 plays an important role in translational accuracy. The sequence is that of Small ribosomal subunit protein uS4 from Francisella philomiragia subsp. philomiragia (strain ATCC 25017 / CCUG 19701 / FSC 153 / O#319-036).